The following is a 129-amino-acid chain: Ribosome-binding factor A (129 aa).

Belongs to the RbfA family. In terms of assembly, monomer. Binds 30S ribosomal subunits, but not 50S ribosomal subunits or 70S ribosomes.

It localises to the cytoplasm. In terms of biological role, one of several proteins that assist in the late maturation steps of the functional core of the 30S ribosomal subunit. Associates with free 30S ribosomal subunits (but not with 30S subunits that are part of 70S ribosomes or polysomes). Required for efficient processing of 16S rRNA. May interact with the 5'-terminal helix region of 16S rRNA. The sequence is that of Ribosome-binding factor A from Stutzerimonas stutzeri (strain A1501) (Pseudomonas stutzeri).